The chain runs to 164 residues: Phosphopantetheine adenylyltransferase (164 aa).

A substrate-binding site is contributed by Ser9. ATP is bound by residues 9–10 (SF) and His17. Positions 41, 73, and 87 each coordinate substrate. ATP-binding positions include 88-90 (GLR), Glu98, and 122-128 (YSYLSSS).

Belongs to the bacterial CoaD family. In terms of assembly, homohexamer. It depends on Mg(2+) as a cofactor.

It localises to the cytoplasm. It catalyses the reaction (R)-4'-phosphopantetheine + ATP + H(+) = 3'-dephospho-CoA + diphosphate. It participates in cofactor biosynthesis; coenzyme A biosynthesis; CoA from (R)-pantothenate: step 4/5. Its function is as follows. Reversibly transfers an adenylyl group from ATP to 4'-phosphopantetheine, yielding dephospho-CoA (dPCoA) and pyrophosphate. In Rhodococcus erythropolis (strain PR4 / NBRC 100887), this protein is Phosphopantetheine adenylyltransferase.